The primary structure comprises 196 residues: Type-4 uracil-DNA glycosylase (196 aa).

Positions 13 and 16 each coordinate [4Fe-4S] cluster. Uracil is bound by residues 40 to 42, Phe54, and Asn80; that span reads GEA. Positions 84 and 100 each coordinate [4Fe-4S] cluster. Position 162 (His162) interacts with uracil.

Belongs to the uracil-DNA glycosylase (UDG) superfamily. Type 4 (UDGa) family.

It carries out the reaction Hydrolyzes single-stranded DNA or mismatched double-stranded DNA and polynucleotides, releasing free uracil.. Its function is as follows. Removes uracil bases that are present in DNA as a result of either deamination of cytosine or misincorporation of dUMP instead of dTMP. Can remove uracil from double-stranded DNA containing either a U/G or U/A base pair as well as from single-stranded DNA. The sequence is that of Type-4 uracil-DNA glycosylase from Pyrobaculum aerophilum (strain ATCC 51768 / DSM 7523 / JCM 9630 / CIP 104966 / NBRC 100827 / IM2).